Here is a 142-residue protein sequence, read N- to C-terminus: Large ribosomal subunit protein uL22c (142 aa).

It belongs to the universal ribosomal protein uL22 family. Part of the 50S ribosomal subunit.

The protein resides in the plastid. It localises to the chloroplast. Its function is as follows. This protein binds specifically to 23S rRNA. In terms of biological role, the globular domain of the protein is located near the polypeptide exit tunnel on the outside of the subunit, while an extended beta-hairpin is found that lines the wall of the exit tunnel in the center of the 70S ribosome. This chain is Large ribosomal subunit protein uL22c (rpl22), found in Carica papaya (Papaya).